An 807-amino-acid chain; its full sequence is MFSAGAESLLHQAREIQDEELKKFCSRICKLLQAEDLGPDTLDSLQRLFLIISATKYSRRLEKTCVDLLQATLGLPACPEQLQVLCAAILREMSPSDSLSLAWDHTQNSRQLSLVASVLLAQGDRNEEVRAVGQGVLRALESRQPEGPSLRHLLPVMAKVVVLSPGTLQEDQATLLSKRLVDWLRYASLQQGLPHSGGFFSTPRARQPGPVTEVDGAVATDFFTVLSSGHRFTDDQWLNVQAFSMLRAWLLHSGPEGPGTLDTDDRSEQEGSTLSVISATSSAGRLLPPRERLREVAFEYCQRLIEQSNRRALRKGDSDLQKACLVEAVLVLDVLCRQDPSFLYRSLSCLKALHGRVRGDPASVRVLLPLAHFFLSHGEAAAVDSEAVYQHLFTRIPVEQFHSPMLAFEFIQFCRDNLHLFSGHLSTLRLSFPNLFKFLAWNSPPLTSEFVALLPALVDAGTALEMLHALLDLPCLTAVLDLQLRSAPAASERPLWDTSLRAPSCLEAFRDPQFQGLFQYLLRPKASGATERLAPLHQLLQPMAGCARVAQCAQAVPTLLQAFFSAVTQVADGSLINQLALLLLGRSDSLYPAPGYAAGVHSVLSSQFLALCTLKPSLVVELARDLLEFLGSVNGLCSRASLVTSVVWAIGEYLSVTYDRRCTVEQINKFFEALEALLFEVTQCRPSAALPRCPPQVVTVLMTTLTKLASRSQDLIPRASLLLSKMRTLAHSPATSSTHSEEGAEAIRTRATELLTLLKMPSVAQFVLTPSTEVCSPRYHRDANTALPLALRTVSRLVEREAGLMPG.

As to quaternary structure, probably part of the adaptor protein complex 5 (AP-5) a tetramer composed of AP5B1, AP5M1, AP5S1 and AP5Z1. Interacts with ZFYVE26 and SPG11.

The protein resides in the cytoplasm. Its subcellular location is the nucleus. Functionally, as part of AP-5, a probable fifth adaptor protein complex it may be involved in endosomal transport. According to PubMed:20613862 it is a putative helicase required for efficient homologous recombination DNA double-strand break repair. The chain is AP-5 complex subunit zeta-1 (AP5Z1) from Homo sapiens (Human).